An 864-amino-acid chain; its full sequence is N-alpha-acetyltransferase 16, NatA auxiliary subunit (864 aa).

TPR repeat units lie at residues 46–79 (GETL…DVKS), 80–113 (HVCW…DKDN), 148–184 (RASW…PPNK), 224–257 (LLVE…NAEN), 374–407 (LWVQ…TPTL), 409–441 (ELFY…DTAD), and 485–518 (MWFQ…FFEI). The interval 603–638 (QKKAKLEEERKHAERERQQKNQKKKRDEEEEEASGL) is disordered. Residues 606–621 (AKLEEERKHAERERQQ) are compositionally biased toward basic and acidic residues.

Component of the N-terminal acetyltransferase A (NatA) complex composed of NAA10 and NAA16.

In terms of biological role, auxillary subunit of the N-terminal acetyltransferase A (NatA) complex which displays alpha (N-terminal) acetyltransferase activity. This is N-alpha-acetyltransferase 16, NatA auxiliary subunit (NAA16) from Homo sapiens (Human).